We begin with the raw amino-acid sequence, 396 residues long: Flavohemoprotein (396 aa).

A Globin domain is found at M1–D136. H85 is a heme b binding site. Active-site charge relay system residues include Y95 and E135. The segment at G147–V396 is reductase. In terms of domain architecture, FAD-binding FR-type spans S150–D255. FAD is bound by residues Y188 and R204–S207. G268–P273 contributes to the NADP(+) binding site. C389–P392 lines the FAD pocket.

The protein belongs to the globin family. Two-domain flavohemoproteins subfamily. It in the C-terminal section; belongs to the flavoprotein pyridine nucleotide cytochrome reductase family. The cofactor is heme b. It depends on FAD as a cofactor.

The enzyme catalyses 2 nitric oxide + NADPH + 2 O2 = 2 nitrate + NADP(+) + H(+). The catalysed reaction is 2 nitric oxide + NADH + 2 O2 = 2 nitrate + NAD(+) + H(+). Its function is as follows. Is involved in NO detoxification in an aerobic process, termed nitric oxide dioxygenase (NOD) reaction that utilizes O(2) and NAD(P)H to convert NO to nitrate, which protects the bacterium from various noxious nitrogen compounds. Therefore, plays a central role in the inducible response to nitrosative stress. The chain is Flavohemoprotein from Pectobacterium atrosepticum (strain SCRI 1043 / ATCC BAA-672) (Erwinia carotovora subsp. atroseptica).